Here is a 291-residue protein sequence, read N- to C-terminus: ATP synthase gamma chain (291 aa).

The protein belongs to the ATPase gamma chain family. As to quaternary structure, F-type ATPases have 2 components, CF(1) - the catalytic core - and CF(0) - the membrane proton channel. CF(1) has five subunits: alpha(3), beta(3), gamma(1), delta(1), epsilon(1). CF(0) has three main subunits: a, b and c.

The protein localises to the cell inner membrane. Functionally, produces ATP from ADP in the presence of a proton gradient across the membrane. The gamma chain is believed to be important in regulating ATPase activity and the flow of protons through the CF(0) complex. The polypeptide is ATP synthase gamma chain (Cupriavidus pinatubonensis (strain JMP 134 / LMG 1197) (Cupriavidus necator (strain JMP 134))).